The sequence spans 222 residues: Ribosomal RNA large subunit methyltransferase E (222 aa).

Basic and acidic residues predominate over residues 1-13; that stretch reads MSRSDKNPHERLK. The interval 1 to 22 is disordered; the sequence is MSRSDKNPHERLKTAKKRTASS. The S-adenosyl-L-methionine site is built by Gly-75, Trp-77, Asp-94, Asp-110, and Asp-134. Lys-174 serves as the catalytic Proton acceptor.

This sequence belongs to the class I-like SAM-binding methyltransferase superfamily. RNA methyltransferase RlmE family.

The protein localises to the cytoplasm. The catalysed reaction is uridine(2552) in 23S rRNA + S-adenosyl-L-methionine = 2'-O-methyluridine(2552) in 23S rRNA + S-adenosyl-L-homocysteine + H(+). Functionally, specifically methylates the uridine in position 2552 of 23S rRNA at the 2'-O position of the ribose in the fully assembled 50S ribosomal subunit. This is Ribosomal RNA large subunit methyltransferase E from Novosphingobium aromaticivorans (strain ATCC 700278 / DSM 12444 / CCUG 56034 / CIP 105152 / NBRC 16084 / F199).